A 202-amino-acid chain; its full sequence is Large ribosomal subunit protein bL25 (202 aa).

The disordered stretch occupies residues 180-202 (PKQEAFEEDAEPSPGEEPEGENQ). The span at 185-202 (FEEDAEPSPGEEPEGENQ) shows a compositional bias: acidic residues.

Belongs to the bacterial ribosomal protein bL25 family. CTC subfamily. As to quaternary structure, part of the 50S ribosomal subunit; part of the 5S rRNA/L5/L18/L25 subcomplex. Contacts the 5S rRNA. Binds to the 5S rRNA independently of L5 and L18.

Its function is as follows. This is one of the proteins that binds to the 5S RNA in the ribosome where it forms part of the central protuberance. The chain is Large ribosomal subunit protein bL25 from Bacillus velezensis (strain DSM 23117 / BGSC 10A6 / LMG 26770 / FZB42) (Bacillus amyloliquefaciens subsp. plantarum).